The sequence spans 309 residues: Extracellular agarase (309 aa).

The segment at residues 1–30 is a signal peptide (tat-type signal); the sequence is MVNRRDLIKWSAVALGAGAGLAGPAPAAHA. Positions 33–309 constitute a GH16 domain; sequence LEWEQYPVPA…YRWVRTYQAV (277 aa). The Nucleophile role is filled by Glu155. Glu160 acts as the Proton donor in catalysis.

This sequence belongs to the glycosyl hydrolase 16 family. Post-translationally, predicted to be exported by the Tat system. The position of the signal peptide cleavage has been experimentally proven.

It localises to the secreted. It carries out the reaction Hydrolysis of (1-&gt;4)-beta-D-galactosidic linkages in agarose, giving the tetramer as the predominant product.. This Streptomyces coelicolor (strain ATCC BAA-471 / A3(2) / M145) protein is Extracellular agarase (dagA).